Here is a 67-residue protein sequence, read N- to C-terminus: Large ribosomal subunit protein uL29 (67 aa).

It belongs to the universal ribosomal protein uL29 family.

This Polaromonas naphthalenivorans (strain CJ2) protein is Large ribosomal subunit protein uL29.